A 689-amino-acid polypeptide reads, in one-letter code: DNA topoisomerase 1 (689 aa).

One can recognise a Toprim domain in the interval aspartate 3 to isoleucine 113. 2 residues coordinate Mg(2+): glutamate 9 and aspartate 82. One can recognise a Topo IA-type catalytic domain in the interval glutamate 129–glutamate 557. Residues serine 163 to glutamine 168 are interaction with DNA. Tyrosine 298 acts as the O-(5'-phospho-DNA)-tyrosine intermediate in catalysis. The segment at serine 328–methionine 357 is disordered. C4-type zinc fingers lie at residues cysteine 577–cysteine 603, cysteine 617–cysteine 645, and cysteine 658–cysteine 681.

This sequence belongs to the type IA topoisomerase family. In terms of assembly, monomer. The cofactor is Mg(2+).

It carries out the reaction ATP-independent breakage of single-stranded DNA, followed by passage and rejoining.. Releases the supercoiling and torsional tension of DNA, which is introduced during the DNA replication and transcription, by transiently cleaving and rejoining one strand of the DNA duplex. Introduces a single-strand break via transesterification at a target site in duplex DNA. The scissile phosphodiester is attacked by the catalytic tyrosine of the enzyme, resulting in the formation of a DNA-(5'-phosphotyrosyl)-enzyme intermediate and the expulsion of a 3'-OH DNA strand. The free DNA strand then undergoes passage around the unbroken strand, thus removing DNA supercoils. Finally, in the religation step, the DNA 3'-OH attacks the covalent intermediate to expel the active-site tyrosine and restore the DNA phosphodiester backbone. This Staphylococcus aureus protein is DNA topoisomerase 1.